The chain runs to 439 residues: Xaa-Pro dipeptidase (439 aa).

Positions 244, 255, 335, 380, and 419 each coordinate Mn(2+).

The protein belongs to the peptidase M24B family. Bacterial-type prolidase subfamily. Requires Mn(2+) as cofactor.

The enzyme catalyses Xaa-L-Pro dipeptide + H2O = an L-alpha-amino acid + L-proline. Functionally, splits dipeptides with a prolyl residue in the C-terminal position. This chain is Xaa-Pro dipeptidase, found in Shewanella woodyi (strain ATCC 51908 / MS32).